Consider the following 214-residue polypeptide: Large ribosomal subunit protein uL16 (214 aa).

Arg32 is modified (citrulline). Lys175 is covalently cross-linked (Glycyl lysine isopeptide (Lys-Gly) (interchain with G-Cter in SUMO2)). A Glycyl lysine isopeptide (Lys-Gly) (interchain with G-Cter in ubiquitin) cross-link involves residue Lys188.

Belongs to the universal ribosomal protein uL16 family. Component of the large ribosomal subunit. Mature ribosomes consist of a small (40S) and a large (60S) subunit. The 40S subunit contains about 33 different proteins and 1 molecule of RNA (18S). The 60S subunit contains about 49 different proteins and 3 molecules of RNA (28S, 5.8S and 5S). In terms of processing, citrullinated by PADI4. Ufmylated by UFL1.

It localises to the cytoplasm. Functionally, component of the large ribosomal subunit. Plays a role in the formation of actively translating ribosomes. May play a role in the embryonic brain development. The protein is Large ribosomal subunit protein uL16 of Homo sapiens (Human).